A 530-amino-acid chain; its full sequence is UPF0422 protein lpp3030 (530 aa).

The first 19 residues, 1-19 (MKFKKIILALACLSSPLYA), serve as a signal peptide directing secretion. Residues 20–66 (DQDQQLKSEIQRLQHQAEDLQAQLNRLQKQLANHKSSQQKHEQQAAA) are a coiled coil. Positions 50–81 (LANHKSSQQKHEQQAAAKPAEPKSKPTTKSGA) are disordered. Low complexity predominate over residues 63-79 (QAAAKPAEPKSKPTTKS).

This sequence belongs to the UPF0422 family.

The protein is UPF0422 protein lpp3030 of Legionella pneumophila (strain Paris).